A 54-amino-acid chain; its full sequence is Large ribosomal subunit protein bL33 (54 aa).

The protein belongs to the bacterial ribosomal protein bL33 family.

The polypeptide is Large ribosomal subunit protein bL33 (Opitutus terrae (strain DSM 11246 / JCM 15787 / PB90-1)).